The following is a 231-amino-acid chain: Superoxide dismutase [Mn] 1, mitochondrial (231 aa).

Residues 1–29 (MAIRCVASRKTLAGLKETSSRLLRIRGIQ) constitute a mitochondrion transit peptide. Mn(2+)-binding residues include histidine 55 and histidine 103. A Phosphoserine modification is found at serine 124. Mn(2+)-binding residues include aspartate 192 and histidine 196.

Belongs to the iron/manganese superoxide dismutase family. As to quaternary structure, homotetramer. Requires Mn(2+) as cofactor.

It localises to the mitochondrion matrix. The catalysed reaction is 2 superoxide + 2 H(+) = H2O2 + O2. With respect to regulation, activated by MTM1. Destroys superoxide anion radicals which are normally produced within the cells and which are toxic to biological systems. This is Superoxide dismutase [Mn] 1, mitochondrial (MSD1) from Arabidopsis thaliana (Mouse-ear cress).